A 646-amino-acid chain; its full sequence is Envelope glycoprotein (646 aa).

An N-terminal signal peptide occupies residues 1 to 25 (MLSVAQSSALFLLQAICILYITKLT). Over 26 to 119 (IPTPVSEINL…INYLLRFISA (94 aa)) the chain is Lumenal. Residues asparagine 72, asparagine 80, and asparagine 101 are each glycosylated (N-linked (GlcNAc...) asparagine; by host). The helical transmembrane segment at 120–140 (IIVYLLLSISKQGIFLFFSIV) threads the bilayer. Residues 141-176 (HYSFKFIKNKKSCNICGNDFYFIHIDCPKPDFTKRS) are Cytoplasmic-facing. The helical transmembrane segment at 177 to 197 (DFHMMFYIILFLSLFFVVTHA) threads the bilayer. Residues 198–588 (DDNVYNYYEH…KNLLYIDYKK (391 aa)) are Lumenal-facing. 2 N-linked (GlcNAc...) asparagine; by host glycosylation sites follow: asparagine 247 and asparagine 336. The chain crosses the membrane as a helical span at residues 589-609 (IIFVFLVAIISIGIFLRSPYM). The Cytoplasmic portion of the chain corresponds to 610–646 (LLSSILKFRKRRKVVATNRSEQLVMDDDVDVFIGPPS).

As to quaternary structure, G2 and G1 interact with each other. Post-translationally, specific enzymatic cleavages in vivo yield mature proteins including glycoprotein G1 and glycoprotein G2. In terms of processing, glycosylated. Glycosylation is essential for proper subcellular location.

It localises to the virion membrane. Its subcellular location is the host Golgi apparatus membrane. Functionally, glycoprotein G2 and glycoprotein G1 interact with each other and are present at the surface of the virion. They are able to attach the virion to a cell receptor and to promote fusion of membranes after endocytosis of the virion. This chain is Envelope glycoprotein, found in European mountain ash ringspot-associated virus (isolate Sorbus aucuparia) (EMARAV).